We begin with the raw amino-acid sequence, 142 residues long: Large ribosomal subunit protein uL16 (142 aa).

This sequence belongs to the universal ribosomal protein uL16 family. In terms of assembly, part of the 50S ribosomal subunit.

In terms of biological role, binds 23S rRNA and is also seen to make contacts with the A and possibly P site tRNAs. This chain is Large ribosomal subunit protein uL16, found in Trichormus variabilis (strain ATCC 29413 / PCC 7937) (Anabaena variabilis).